The chain runs to 469 residues: Transcriptional coactivator YAP1 (469 aa).

Pro residues predominate over residues 1–21 (MEPAQQPPPQPAPQGPAPPSV). The disordered stretch occupies residues 1–47 (MEPAQQPPPQPAPQGPAPPSVSPAGTPAAPPAPPAGHQVVHVRGDSE). At Ser-46 the chain carries Phosphoserine. The residue at position 48 (Thr-48) is a Phosphothreonine. A coiled-coil region spans residues 71-85 (MRLRKLPDSFFKPPE). Lys-75 bears the N6-lactoyllysine mark. The disordered stretch occupies residues 76–99 (LPDSFFKPPEPKSHSRQASTDAGT). Residues Ser-90 and Ser-94 each carry the phosphoserine modification. Residues Thr-95 and Thr-104 each carry the phosphothreonine modification. Ser-112 carries the phosphoserine; by LATS1 and LATS2 modification. Residues Ser-113 and Ser-116 each carry the phosphoserine modification. At Thr-136 the chain carries Phosphothreonine; by MAPK8 and MAPK9. Position 146 is a phosphoserine; by LATS1 and LATS2 (Ser-146). WW domains follow at residues 153-186 (VPLP…DPRK) and 212-245 (GPLP…DPRL). The interval 258–290 (SAPVKQPPPLAPQSPQGGVLGGGSSNQQQQIQL) is disordered. A phosphoserine mark is found at Ser-271 and Ser-320. Residues 273–469 (QGGVLGGGSS…LDKESFLTWL (197 aa)) form a transactivation domain region. The stretch at 280-325 (GSSNQQQQIQLQQLQMEKERLRLKQQELFRQELALRSQLPSLEQDG) forms a coiled coil. Ser-333 carries the phosphoserine; by MAPK8 and MAPK9 modification. A compositionally biased stretch (polar residues) spans 345-357 (TNSSDPFLNSGTY). Residues 345-405 (TNSSDPFLNS…SQSTLPSQQS (61 aa)) are disordered. Ser-347, Ser-348, and Ser-354 each carry phosphoserine. At Ser-363 the chain carries Phosphoserine; by LATS1 and LATS2. A compositionally biased stretch (polar residues) spans 365-375 (DSGLSMSSYSI). Phosphoserine; by CK1 is present on residues Ser-366 and Ser-369. Phosphotyrosine; by ABL1 is present on Tyr-373. Phosphothreonine; by MAPK8 and MAPK9 is present on Thr-378. Residues 393–405 (DTISQSTLPSQQS) are compositionally biased toward polar residues.

It belongs to the YAP1 family. As to quaternary structure, part of a complex when phosphorylated that contains DSG3, PKP1, YAP1 and YWHAG; the complex is required for localization of DSG3 and YAP1 to the cell membrane in keratinocytes. Binds to the SH3 domain of the YES kinase. Binds to WBP1 and WBP2. Binds, in vitro, through the WW1 domain, to neural isoforms of ENAH that contain the PPSY motif. The phosphorylated form interacts with YWHAB. Interacts (via WW domains) with LATS1 (via PPxY motif 2). Interacts with LATS2. Interacts (via WW domain 1) with ERBB4 (via PPxY motif 2). Interacts with TEAD1, TEAD2, TEAD3 and TEAD4. Interacts with TP73. Interacts with RUNX1. Interacts with HCK. Interacts (via WW domains) with PTPN14 (via PPxY motif 2); this interaction leads to the cytoplasmic sequestration of YAP1 and inhibits its transcriptional coactivator activity. Interacts (when phosphorylated at Ser-112) with SMAD2, SMAD3 and WWTR1. Interacts with PRRG2 (via cytoplasmic domain). Interacts (via WW domains) with PRRG4 (via cytoplasmic domain). Interacts (phosphorylated) with CLDN18; the interaction sequesters YAP1 away from the nucleus and thereby restricts transcription of YAP1 target genes. Interacts with SMAD1. Interacts with AMOT; the interaction facilitates translocation of YAP1 to the cytoplasm and tight junctions. Interacts with AMOTL2, the interaction is required for ubiquitination of AMOTL2 and localization of YAP1 to tight junctions. Phosphorylated by LATS1 and LATS2; leading to cytoplasmic translocation and inactivation. Phosphorylated by ABL1; leading to YAP1 stabilization, enhanced interaction with TP73 and recruitment onto proapoptotic genes; in response to DNA damage. Phosphorylation at Ser-366 and Ser-369 by CK1 is triggered by previous phosphorylation at Ser-363 by LATS proteins and leads to YAP1 ubiquitination by SCF(beta-TRCP) E3 ubiquitin ligase and subsequent degradation. Phosphorylated at Thr-104, Thr-136, Ser-333 and Thr-378 by MAPK8/JNK1 and MAPK9/JNK2, which is required for the regulation of apoptosis by YAP1. In terms of processing, lactylation by AARS1 promotes nuclear localization and stabilization of YAP1, leading to increased Hippo signaling pathway. Delactylated by SIRT1. Post-translationally, ubiquitinated by SCF(beta-TRCP) E3 ubiquitin ligase. In terms of tissue distribution, highly specific to cortical neurons.

It localises to the cytoplasm. Its subcellular location is the nucleus. The protein resides in the cell junction. The protein localises to the tight junction. It is found in the cell membrane. In terms of biological role, transcriptional regulator with dual roles as a coactivator and corepressor. Critical downstream regulatory target in the Hippo signaling pathway, crucial for organ size control and tumor suppression by restricting proliferation and promoting apoptosis. The Hippo signaling pathway core involves a kinase cascade featuring STK3/MST2 and STK4/MST1, along with its regulatory partner SAV1, which phosphorylates and activates LATS1/2 in complex with their regulatory protein, MOB1. This activation leads to the phosphorylation and inactivation of the YAP1 oncoprotein and WWTR1/TAZ. Phosphorylation of YAP1 by LATS1/2 prevents its nuclear translocation, thereby regulating the expression of its target genes. The transcriptional regulation of gene expression requires TEAD transcription factors and modulates cell growth, anchorage-independent growth, and induction of epithelial-mesenchymal transition (EMT). Plays a key role in tissue tension and 3D tissue shape by regulating the cortical actomyosin network, acting via ARHGAP18, a Rho GTPase activating protein that suppresses F-actin polymerization. It also suppresses ciliogenesis by acting as a transcriptional corepressor of TEAD4 target genes AURKA and PLK1. In conjunction with WWTR1, regulates TGFB1-dependent SMAD2 and SMAD3 nuclear accumulation. Synergizes with WBP2 to enhance PGR activity. Its function is as follows. Attenuates p73-mediated cell death signaling in transcriptional repression-induced atypical death (TRIAD) of neurons. The polypeptide is Transcriptional coactivator YAP1 (Yap1) (Rattus norvegicus (Rat)).